Reading from the N-terminus, the 406-residue chain is Collagen and calcium-binding EGF domain-containing protein 1 (406 aa).

The N-terminal stretch at 1-34 is a signal peptide; it reads MVPPPPSRGGAARGQLGRSLGPLLLLLALGHTWT. Residues 134 to 175 form the EGF-like; calcium-binding domain; it reads DIDECASSNGTLCAHICINTLGSYRCECREGYIREDDGKTCT. 3 disulfide bridges follow: C138–C150, C146–C159, and C161–C174. Residue N142 is glycosylated (N-linked (GlcNAc...) asparagine). Residue N182 is glycosylated (N-linked (GlcNAc...) asparagine). Disordered stretches follow at residues 244-335 and 360-406; these read YLPG…PGSF and RTHS…DFYP. Collagen-like domains are found at residues 245–290 and 300–333; these read LPGP…PMGP and GRRGPVGPPGAPGRDGSKGERGAPGPRGSPGPPG. Over residues 270 to 279 the composition is skewed to pro residues; the sequence is PGMPGPPGQP. The segment covering 281 to 292 has biased composition (low complexity); it reads PRGSMGPMGPSP. Residue S385 is glycosylated (O-linked (Xyl...) (chondroitin sulfate) serine). Residues 386–406 are compositionally biased toward basic and acidic residues; the sequence is GDDHPRRTETRDLRAPRDFYP.

The protein belongs to the CCBE1 family. In terms of tissue distribution, detected in fibroblasts and urine (at protein level). Not expressed in blood or lymphatic endothelial cells.

The protein localises to the secreted. Required for lymphangioblast budding and angiogenic sprouting from venous endothelium during embryogenesis. In Homo sapiens (Human), this protein is Collagen and calcium-binding EGF domain-containing protein 1 (CCBE1).